Here is a 118-residue protein sequence, read N- to C-terminus: RxLR effector protein PITG_19617 (118 aa).

An N-terminal signal peptide occupies residues 1 to 21 (MRAVYILAMACAATLQASSSA). Residues 50–64 (RLLRVEDKEEETEEE) carry the RxLR-dEER motif.

It belongs to the RxLR effector family.

Its subcellular location is the secreted. It localises to the host nucleus. It is found in the host cytoplasm. Functionally, effector that enhances P.infestans colonization of Nicotiana benthamiana leaves. In Phytophthora infestans (strain T30-4) (Potato late blight agent), this protein is RxLR effector protein PITG_19617.